The primary structure comprises 93 residues: Putative septation protein SpoVG (93 aa).

Belongs to the SpoVG family.

In terms of biological role, could be involved in septation. This Fusobacterium nucleatum subsp. nucleatum (strain ATCC 25586 / DSM 15643 / BCRC 10681 / CIP 101130 / JCM 8532 / KCTC 2640 / LMG 13131 / VPI 4355) protein is Putative septation protein SpoVG.